The chain runs to 468 residues: Soluble pyridine nucleotide transhydrogenase (468 aa).

Residue 38-47 (ERHYNVGGGC) participates in FAD binding.

Belongs to the class-I pyridine nucleotide-disulfide oxidoreductase family. It depends on FAD as a cofactor.

The protein resides in the cytoplasm. It catalyses the reaction NAD(+) + NADPH = NADH + NADP(+). Functionally, conversion of NADPH, generated by peripheral catabolic pathways, to NADH, which can enter the respiratory chain for energy generation. This is Soluble pyridine nucleotide transhydrogenase from Pectobacterium atrosepticum (strain SCRI 1043 / ATCC BAA-672) (Erwinia carotovora subsp. atroseptica).